Here is a 504-residue protein sequence, read N- to C-terminus: Sucrose phosphorylase (504 aa).

D50 lines the substrate pocket. Sucrose contacts are provided by residues H88, 190 to 192 (RLD), E232, 289 to 290 (HD), 342 to 345 (DLYQ), and R399. Residue D192 is the Nucleophile of the active site. E232 functions as the Proton donor in the catalytic mechanism.

The protein belongs to the glycosyl hydrolase 13 family. Sucrose phosphorylase subfamily. Homodimer.

It catalyses the reaction sucrose + phosphate = D-fructose + alpha-D-glucose 1-phosphate. In terms of biological role, catalyzes the reversible phosphorolysis of sucrose into alpha-D-glucose 1-phosphate (Glc1P) and D-fructose. Is involved in sucrose degradation. Also displays transglucosylation activity in vitro, by transferring the glucosyl moiety of Glc1P to a broad range of monomeric sugars, such as D- and L-arabinose, D- and L-arabitol, and xylitol. The polypeptide is Sucrose phosphorylase (Bifidobacterium adolescentis (strain ATCC 15703 / DSM 20083 / NCTC 11814 / E194a)).